The following is a 258-amino-acid chain: Octanoyltransferase (258 aa).

A BPL/LPL catalytic domain is found at 42–226 (NLGADTLLLL…AVVAALDGAL (185 aa)). Substrate contacts are provided by residues 80–87 (RGGKITWH), 156–158 (AIG), and 169–171 (GFS). The active-site Acyl-thioester intermediate is C187.

This sequence belongs to the LipB family.

It is found in the cytoplasm. The catalysed reaction is octanoyl-[ACP] + L-lysyl-[protein] = N(6)-octanoyl-L-lysyl-[protein] + holo-[ACP] + H(+). It participates in protein modification; protein lipoylation via endogenous pathway; protein N(6)-(lipoyl)lysine from octanoyl-[acyl-carrier-protein]: step 1/2. Functionally, catalyzes the transfer of endogenously produced octanoic acid from octanoyl-acyl-carrier-protein onto the lipoyl domains of lipoate-dependent enzymes. Lipoyl-ACP can also act as a substrate although octanoyl-ACP is likely to be the physiological substrate. The sequence is that of Octanoyltransferase from Rhodococcus opacus (strain B4).